Here is a 272-residue protein sequence, read N- to C-terminus: D-aminoacyl-tRNA deacylase (272 aa).

Belongs to the DtdA deacylase family. In terms of assembly, monomer. Requires Zn(2+) as cofactor.

It catalyses the reaction a D-aminoacyl-tRNA + H2O = a tRNA + a D-alpha-amino acid + H(+). The enzyme catalyses glycyl-tRNA(Ala) + H2O = tRNA(Ala) + glycine + H(+). Its function is as follows. D-aminoacyl-tRNA deacylase with broad substrate specificity. By recycling D-aminoacyl-tRNA to D-amino acids and free tRNA molecules, this enzyme counteracts the toxicity associated with the formation of D-aminoacyl-tRNA entities in vivo. The chain is D-aminoacyl-tRNA deacylase from Desulfurococcus amylolyticus (strain DSM 18924 / JCM 16383 / VKM B-2413 / 1221n) (Desulfurococcus kamchatkensis).